The chain runs to 276 residues: Pantothenate synthetase (276 aa).

27–34 (MGALHKGH) contacts ATP. The active-site Proton donor is His34. A (R)-pantoate-binding site is contributed by Gln58. Gln58 contacts beta-alanine. 147-150 (GKKD) is an ATP binding site. Gln153 is a binding site for (R)-pantoate. ATP contacts are provided by residues Val176 and 184 to 187 (LSSR).

Belongs to the pantothenate synthetase family. Homodimer.

The protein resides in the cytoplasm. The enzyme catalyses (R)-pantoate + beta-alanine + ATP = (R)-pantothenate + AMP + diphosphate + H(+). It participates in cofactor biosynthesis; (R)-pantothenate biosynthesis; (R)-pantothenate from (R)-pantoate and beta-alanine: step 1/1. Functionally, catalyzes the condensation of pantoate with beta-alanine in an ATP-dependent reaction via a pantoyl-adenylate intermediate. In Helicobacter pylori (strain ATCC 700392 / 26695) (Campylobacter pylori), this protein is Pantothenate synthetase.